We begin with the raw amino-acid sequence, 390 residues long: MDKNKHILIGICGGIASYKSVYIVSSLVKLGYKVKVIMTQNATKFITPLTLETISKNKIITNLWDLDHNEVEHIKIAKWAHLILVIPATYNTISKIASGIADDALTTIISASTAPTYFAIAMNNIMYSNPILKENIKKLKTYNYKFIEPDKGFLACSSNALGRLKNEDKIIKIILNEFNQKDYLKNKKILITASRTEELIDPIRYFSNTSTGKMGFCLAQEAVKLGAQVTIITGPTNENDPEGVNIIKIKTAMEMYKEALKIYNKFEIIIGAAAVADFKPKHIFNSKIKKNKINRLYIKLVKNPDIIQHIGHNKLKNQIVIGFCAENSKNLIQKAKEKLKKKNLDFIIANELKYFGSKLNKVYIINKQSIKELPEMEKSEVAKEILKILY.

A phosphopantothenoylcysteine decarboxylase region spans residues M1–K188. C156 functions as the Proton donor in the catalytic mechanism. The phosphopantothenate--cysteine ligase stretch occupies residues I189–Y390. CTP is bound by residues D277, K287, P304–I307, F323, K338, and K342.

The protein in the N-terminal section; belongs to the HFCD (homo-oligomeric flavin containing Cys decarboxylase) superfamily. This sequence in the C-terminal section; belongs to the PPC synthetase family. It depends on Mg(2+) as a cofactor. The cofactor is FMN.

The enzyme catalyses N-[(R)-4-phosphopantothenoyl]-L-cysteine + H(+) = (R)-4'-phosphopantetheine + CO2. It carries out the reaction (R)-4'-phosphopantothenate + L-cysteine + CTP = N-[(R)-4-phosphopantothenoyl]-L-cysteine + CMP + diphosphate + H(+). The protein operates within cofactor biosynthesis; coenzyme A biosynthesis; CoA from (R)-pantothenate: step 2/5. It functions in the pathway cofactor biosynthesis; coenzyme A biosynthesis; CoA from (R)-pantothenate: step 3/5. Catalyzes two sequential steps in the biosynthesis of coenzyme A. In the first step cysteine is conjugated to 4'-phosphopantothenate to form 4-phosphopantothenoylcysteine. In the second step the latter compound is decarboxylated to form 4'-phosphopantotheine. The chain is Coenzyme A biosynthesis bifunctional protein CoaBC from Borreliella burgdorferi (strain ATCC 35210 / DSM 4680 / CIP 102532 / B31) (Borrelia burgdorferi).